Consider the following 85-residue polypeptide: Metallothionein-like protein 4B (85 aa).

A disordered region spans residues 1 to 20 (MADTGKGSASASCNDRCGCP).

This sequence belongs to the metallothionein superfamily. Type 15 family. As to expression, expressed specifically in seeds.

It is found in the cytoplasm. It localises to the nucleus. The protein localises to the cell membrane. Its function is as follows. Metallothioneins have a high content of cysteine residues that bind various heavy metals. Functions as a metal chelator of copper (Cu) and zinc (Zn). Plays a role in storing and distributing Zn ion in seed. In Arabidopsis thaliana (Mouse-ear cress), this protein is Metallothionein-like protein 4B (MT4B).